The primary structure comprises 355 residues: Daphnetin O-methyltransferase 1 (355 aa).

Aspartate 222, aspartate 242, and lysine 256 together coordinate S-adenosyl-L-homocysteine. Catalysis depends on histidine 260, which acts as the Proton acceptor.

This sequence belongs to the class I-like SAM-binding methyltransferase superfamily. Cation-independent O-methyltransferase family. COMT subfamily.

It catalyses the reaction 7,8-dihydroxycoumarin + S-adenosyl-L-methionine = 7-hydroxy-8-methoxycoumarin + S-adenosyl-L-homocysteine + H(+). It participates in aromatic compound metabolism. The protein operates within secondary metabolite biosynthesis. In terms of biological role, O-methyltransferase involved in the biosynthesis of coumarins natural products such as daphnetin derivatives. Catalyzes specifically the methylation of daphnetin (7,8-dihydroxycoumarin) to produce hydrangetin (7-hydroxy-8-methoxycoumarin). Probably involved in acclimation to low temperature conditions. The polypeptide is Daphnetin O-methyltransferase 1 (Secale cereale (Rye)).